The chain runs to 452 residues: Phosphoglucosamine mutase (452 aa).

The active-site Phosphoserine intermediate is the serine 108. Serine 108, aspartate 247, aspartate 249, and aspartate 251 together coordinate Mg(2+). Serine 108 carries the phosphoserine modification.

This sequence belongs to the phosphohexose mutase family. The cofactor is Mg(2+). Activated by phosphorylation.

The catalysed reaction is alpha-D-glucosamine 1-phosphate = D-glucosamine 6-phosphate. Its function is as follows. Catalyzes the conversion of glucosamine-6-phosphate to glucosamine-1-phosphate. The polypeptide is Phosphoglucosamine mutase (Burkholderia pseudomallei (strain 668)).